The primary structure comprises 78 residues: uncharacterized protein (78 aa).

A run of 2 helical transmembrane segments spans residues 13–35 (AGVG…PTGI) and 50–72 (GTTF…FYYF).

It is found in the cell membrane. This is an uncharacterized protein from Pasteurella multocida (strain Pm70).